The following is a 216-amino-acid chain: MGRKPSPRAQELPEEEARTCCGCRFPLLLALLQLALGIAVTVLGFLMASISPSLLVRDTPFWAGSIVCVVAYLGLFMLCVSYQVDERTCVQFSMKVFYFLLSALGLMVCMLAVAFAAHHYSLLAQFTCETSLDSCQCKLPSSEPLSRAFVYRDVTDCTSVTGTFKLFLIIQMVLNLVCGLVCLLACFVMWKHRYQVFYVGVGLRSLMASDGQLPKA.

Over 1 to 26 (MGRKPSPRAQELPEEEARTCCGCRFP) the chain is Cytoplasmic. Residues 27–47 (LLLALLQLALGIAVTVLGFLM) traverse the membrane as a helical segment. Residues 48–59 (ASISPSLLVRDT) are Extracellular-facing. The chain crosses the membrane as a helical span at residues 60–80 (PFWAGSIVCVVAYLGLFMLCV). Topologically, residues 81 to 95 (SYQVDERTCVQFSMK) are cytoplasmic. The helical transmembrane segment at 96-116 (VFYFLLSALGLMVCMLAVAFA) threads the bilayer. The Extracellular segment spans residues 117 to 166 (AHHYSLLAQFTCETSLDSCQCKLPSSEPLSRAFVYRDVTDCTSVTGTFKL). The helical transmembrane segment at 167–187 (FLIIQMVLNLVCGLVCLLACF) threads the bilayer. At 188 to 216 (VMWKHRYQVFYVGVGLRSLMASDGQLPKA) the chain is on the cytoplasmic side.

The protein resides in the cell membrane. The protein localises to the sarcolemma. It localises to the postsynaptic cell membrane. Component of the dystrophin-glycoprotein complex (DGC), a complex that spans the muscle plasma membrane and forms a link between the F-actin cytoskeleton and the extracellular matrix. Preferentially associates with the sarcoglycan subcomplex of the DGC. The chain is Sarcospan (Sspn) from Mus musculus (Mouse).